The primary structure comprises 452 residues: GTPase Der (452 aa).

EngA-type G domains lie at 4-169 (PIVA…PAPQ) and 177-352 (IKVA…QEHR). GTP is bound by residues 10–17 (GRPNVGKS), 57–61 (DTGGL), 120–123 (NKCE), 183–190 (GRPNVGKS), 230–234 (DTAGI), and 295–298 (NKWD). In terms of domain architecture, KH-like spans 353–439 (RRVTTAVINE…IRLFWRGKKV (87 aa)).

It belongs to the TRAFAC class TrmE-Era-EngA-EngB-Septin-like GTPase superfamily. EngA (Der) GTPase family. Associates with the 50S ribosomal subunit.

Functionally, GTPase that plays an essential role in the late steps of ribosome biogenesis. The protein is GTPase Der of Synechocystis sp. (strain ATCC 27184 / PCC 6803 / Kazusa).